Here is a 153-residue protein sequence, read N- to C-terminus: MAKITGNLVATGLKFGIVTARFNDFINDKLLSGAIDTLVRHGADENNIDTAWVPGAFEIPLVAKKMATSGKYDAVICLGTVIRGSTTHYDYVCNEAAKGIGAVALETGVPVIFGVLTTENIEQAIERAGTKAGNKGSECALGAIEMVNVLKAI.

5-amino-6-(D-ribitylamino)uracil is bound by residues F22, 56–58 (AFE), and 80–82 (TVI). 85-86 (ST) is a binding site for (2S)-2-hydroxy-3-oxobutyl phosphate. Residue H88 is the Proton donor of the active site. F113 lines the 5-amino-6-(D-ribitylamino)uracil pocket. R127 is a binding site for (2S)-2-hydroxy-3-oxobutyl phosphate.

Belongs to the DMRL synthase family. As to quaternary structure, forms an icosahedral capsid composed of 60 subunits, arranged as a dodecamer of pentamers.

It carries out the reaction (2S)-2-hydroxy-3-oxobutyl phosphate + 5-amino-6-(D-ribitylamino)uracil = 6,7-dimethyl-8-(1-D-ribityl)lumazine + phosphate + 2 H2O + H(+). Its pathway is cofactor biosynthesis; riboflavin biosynthesis; riboflavin from 2-hydroxy-3-oxobutyl phosphate and 5-amino-6-(D-ribitylamino)uracil: step 1/2. In terms of biological role, catalyzes the formation of 6,7-dimethyl-8-ribityllumazine by condensation of 5-amino-6-(D-ribitylamino)uracil with 3,4-dihydroxy-2-butanone 4-phosphate. This is the penultimate step in the biosynthesis of riboflavin. The sequence is that of 6,7-dimethyl-8-ribityllumazine synthase from Actinobacillus pleuropneumoniae serotype 7 (strain AP76).